Consider the following 341-residue polypeptide: Anthranilate phosphoribosyltransferase (341 aa).

5-phospho-alpha-D-ribose 1-diphosphate-binding positions include G84, 87 to 88, T92, 94 to 97, 112 to 120, and S124; these read GD, NIST, and KHGNRSVSS. Position 84 (G84) interacts with anthranilate. S96 contacts Mg(2+). Position 115 (N115) interacts with anthranilate. R170 provides a ligand contact to anthranilate. Positions 229 and 230 each coordinate Mg(2+).

This sequence belongs to the anthranilate phosphoribosyltransferase family. As to quaternary structure, homodimer. It depends on Mg(2+) as a cofactor.

The catalysed reaction is N-(5-phospho-beta-D-ribosyl)anthranilate + diphosphate = 5-phospho-alpha-D-ribose 1-diphosphate + anthranilate. It functions in the pathway amino-acid biosynthesis; L-tryptophan biosynthesis; L-tryptophan from chorismate: step 2/5. Functionally, catalyzes the transfer of the phosphoribosyl group of 5-phosphorylribose-1-pyrophosphate (PRPP) to anthranilate to yield N-(5'-phosphoribosyl)-anthranilate (PRA). This chain is Anthranilate phosphoribosyltransferase, found in Polynucleobacter necessarius subsp. necessarius (strain STIR1).